Reading from the N-terminus, the 638-residue chain is Eukaryotic translation initiation factor 2A (638 aa).

WD repeat units lie at residues 287–329 (SKEG…FDFG) and 331–370 (GPRN…KLAN). The segment covering 441–450 (KITKAKHEGI) has biased composition (basic and acidic residues). Positions 441-593 (KITKAKHEGI…SDKERKIRSV (153 aa)) are disordered. T463 bears the Phosphothreonine mark. Residues 492-501 (AAAGGVNGNK) are compositionally biased toward low complexity. Residues 583-593 (ISDKERKIRSV) are compositionally biased toward basic and acidic residues.

The protein belongs to the WD repeat EIF2A family.

Functionally, functions in the early steps of protein synthesis of a small number of specific mRNAs. Acts by directing the binding of methionyl-tRNAi to 40S ribosomal subunits. In contrast to the eIF-2 complex, it binds methionyl-tRNAi to 40S subunits in a codon-dependent manner, whereas the eIF-2 complex binds methionyl-tRNAi to 40S subunits in a GTP-dependent manner. This chain is Eukaryotic translation initiation factor 2A, found in Drosophila melanogaster (Fruit fly).